Here is a 370-residue protein sequence, read N- to C-terminus: Peptidyl-prolyl cis-trans isomerase D (370 aa).

Ser-5 is subject to Phosphoserine. Positions 19-183 (FFDVDIGGER…KLCVIAECGE (165 aa)) constitute a PPIase cyclophilin-type domain. Lys-171 carries the post-translational modification N6-acetyllysine. The segment at 185-215 (KEGDDWGIFPKDGSGDSHPDFPEDADIDLKD) is chaperone activity. Residue Ser-198 is modified to Phosphoserine. The segment at 214–370 (KDVDKILLIS…EKAVYAKMFA (157 aa)) is interaction with HSP90AB1. TPR repeat units lie at residues 223-256 (SEDL…VDSS), 273-306 (LSCV…DPSN), and 307-340 (TKAL…APGD).

The protein belongs to the cyclophilin-type PPIase family. PPIase D subfamily. Identified in ESR1 or NR3C1/GCR steroid receptor-chaperone complexes. Found in HSP90 chaperone complexes with kinase clients LCK or EIF2AK1. Two monomers associate with one HSP90 homodimer. Interacts with HSP90AA1. Interacts with HSP90AB1; PPID and FKBP4 compete for binding to HSP90AB1 and the interaction is mutually exclusive with the PPID:HSPA8 interaction. Interacts with HSPA8; PPID and STIP1 but not FKBP4 compete for binding to HSPA8 and the interaction is mutually exclusive with the PPID:HSP90AB1 interaction. Interacts with S100A1 and S100A2; the interactions dissociate the PPID:HSP90AA1 interaction. Interacts with S100A6. Interacts with MYB, ILF2, XRCC6, RACK1 and RPS3. Interacts with cytoplasmic dynein 1 intermediate chain (DYNC1I1 or DYNC1I2).

The protein localises to the cytoplasm. It is found in the nucleus. It localises to the nucleolus. Its subcellular location is the nucleoplasm. It carries out the reaction [protein]-peptidylproline (omega=180) = [protein]-peptidylproline (omega=0). With respect to regulation, less sensitive to inhibition by cyclosporin A than is CYP-18. PPIase that catalyzes the cis-trans isomerization of proline imidic peptide bonds in oligopeptides and may therefore assist protein folding. Proposed to act as a co-chaperone in HSP90 complexes such as in unligated steroid receptors heterocomplexes. Different co-chaperones seem to compete for association with HSP90 thus establishing distinct HSP90-co-chaperone-receptor complexes with the potential to exert tissue-specific receptor activity control. May have a preference for estrogen receptor complexes and is not found in glucocorticoid receptor complexes. May be involved in cytoplasmic dynein-dependent movement of the receptor from the cytoplasm to the nucleus. May regulate MYB by inhibiting its DNA-binding activity. Involved in regulation of AHR signaling by promoting the formation of the AHR:ARNT dimer; the function is independent of HSP90 but requires the chaperone activity region. Involved in regulation of UV radiation-induced apoptosis. The protein is Peptidyl-prolyl cis-trans isomerase D of Mus musculus (Mouse).